The sequence spans 185 residues: Ribosome-recycling factor (185 aa).

Residues 141–161 (KQEKDKKISEDDLKRAEKEVQ) are disordered.

The protein belongs to the RRF family.

The protein localises to the cytoplasm. Responsible for the release of ribosomes from messenger RNA at the termination of protein biosynthesis. May increase the efficiency of translation by recycling ribosomes from one round of translation to another. In Geotalea uraniireducens (strain Rf4) (Geobacter uraniireducens), this protein is Ribosome-recycling factor.